The primary structure comprises 241 residues: tRNA (guanine-N(7)-)-methyltransferase (241 aa).

Residues 1–10 (MTESNDTPIQ) show a composition bias toward polar residues. The interval 1 to 20 (MTESNDTPIQTEEGDERQHR) is disordered. S-adenosyl-L-methionine-binding residues include glutamate 71, glutamate 96, aspartate 123, and aspartate 146. Aspartate 146 is an active-site residue. Substrate contacts are provided by residues lysine 150, aspartate 182, and 219 to 222 (TKFE).

Belongs to the class I-like SAM-binding methyltransferase superfamily. TrmB family.

It carries out the reaction guanosine(46) in tRNA + S-adenosyl-L-methionine = N(7)-methylguanosine(46) in tRNA + S-adenosyl-L-homocysteine. It participates in tRNA modification; N(7)-methylguanine-tRNA biosynthesis. Its function is as follows. Catalyzes the formation of N(7)-methylguanine at position 46 (m7G46) in tRNA. The chain is tRNA (guanine-N(7)-)-methyltransferase from Pseudomonas fluorescens (strain Pf0-1).